Consider the following 736-residue polypeptide: Putative ATP-dependent RNA helicase CG14443 (736 aa).

4 disordered regions span residues 32-58 (TKSSIWGSSASDISGQSRSLKSSSSVL), 73-166 (GIEG…GERP), 183-237 (NSFK…NSWR), and 265-296 (SFTRSRSPHRNTLCYQDQSKNPSRPSNYNTWK). Composition is skewed to low complexity over residues 34-58 (SSIWGSSASDISGQSRSLKSSSSVL) and 125-160 (SSESAHSSGSESSSSDSNSGSSSDSDSTTGSSSHGS). The span at 190 to 199 (TSRENKESRS) shows a compositional bias: basic and acidic residues. The span at 277–296 (LCYQDQSKNPSRPSNYNTWK) shows a compositional bias: polar residues. The Q motif signature appears at 330 to 358 (LSFERSGFNATILQQLEDQGYDGPTPIQA). The Helicase ATP-binding domain maps to 361 to 534 (WSIAKEGKNI…NKFLGQYTAI (174 aa)). 374-381 (SGKGTGKT) provides a ligand contact to ATP. The short motif at 482 to 485 (DNID) is the DEAD box element. The Helicase C-terminal domain maps to 561–719 (KVERLMKELT…LLQLAEEKMF (159 aa)).

The protein belongs to the DEAD box helicase family.

It carries out the reaction ATP + H2O = ADP + phosphate + H(+). Probable ATP-binding RNA helicase. This is Putative ATP-dependent RNA helicase CG14443 from Drosophila melanogaster (Fruit fly).